The following is a 197-amino-acid chain: uncharacterized protein (197 aa).

Over residues 1–10 the composition is skewed to polar residues; it reads MKNNYTSLKS. Disordered stretches follow at residues 1-46 and 54-73; these read MKNN…PPYS and LVPE…NVER. Residues 18-37 are compositionally biased toward basic and acidic residues; sequence LKTGHEIDLEKGPLPEHNSE. A compositionally biased stretch (polar residues) spans 58-69; sequence DSSTGPTETANP. Transmembrane regions (helical) follow at residues 83-105 and 120-142; these read NIYS…FTAW and AFFV…EPGL.

It belongs to the WTF family.

The protein resides in the endoplasmic reticulum membrane. This is an uncharacterized protein from Schizosaccharomyces pombe (strain 972 / ATCC 24843) (Fission yeast).